Reading from the N-terminus, the 203-residue chain is NAD(P)H dehydrogenase (quinone) (203 aa).

Residues 3–194 (IMVVYYSAYG…AGANFQGRHV (192 aa)) enclose the Flavodoxin-like domain. FMN contacts are provided by residues 9–14 (SAYGHV) and 82–84 (ARF). Y11 is an NAD(+) binding site. W102 lines the substrate pocket. Residues 117-123 (STGTQHG) and H138 each bind FMN.

This sequence belongs to the WrbA family. FMN serves as cofactor.

It catalyses the reaction a quinone + NADH + H(+) = a quinol + NAD(+). The catalysed reaction is a quinone + NADPH + H(+) = a quinol + NADP(+). The chain is NAD(P)H dehydrogenase (quinone) from Syntrophus aciditrophicus (strain SB).